We begin with the raw amino-acid sequence, 616 residues long: Chaperone protein HscA homolog (616 aa).

Belongs to the heat shock protein 70 family.

In terms of biological role, chaperone involved in the maturation of iron-sulfur cluster-containing proteins. Has a low intrinsic ATPase activity which is markedly stimulated by HscB. This chain is Chaperone protein HscA homolog, found in Histophilus somni (strain 129Pt) (Haemophilus somnus).